The sequence spans 248 residues: tRNA pseudouridine synthase A (248 aa).

The Nucleophile role is filled by D53. Substrate is bound at residue Y116.

The protein belongs to the tRNA pseudouridine synthase TruA family. In terms of assembly, homodimer.

It catalyses the reaction uridine(38/39/40) in tRNA = pseudouridine(38/39/40) in tRNA. Functionally, formation of pseudouridine at positions 38, 39 and 40 in the anticodon stem and loop of transfer RNAs. In Helicobacter hepaticus (strain ATCC 51449 / 3B1), this protein is tRNA pseudouridine synthase A.